Reading from the N-terminus, the 419-residue chain is MEATLSLEPAGRSCWDEPLSITVRGLVPEQPVTLRAALRDEKGALFRARALYRADAHGELDLARAPALGGSFTGLEPMGLIWAMEPERPFWRLVKRDVQTPFVVELEVLDGHEPDGGRLLARAVHERHFMAPGVRRVPVREGRVRATLFLPPEPGPFPGIIDLFGVGGGLLEYRASLLAGKGFAVMALAYYNYDDLPKTMETMRIEYFEEAVNYLRGHPEVKGPGIGLLGISKGGELGLAMASFLKGITAAVVINGSVAAVGNTICYKDETIPPVTILRNQVKMTKDGLKDVVDALQSPLVEQKSFIPVERSDTTFLFLVGQDDHNWKSEFYANEISKRLQAHGKEKPQIICYPEAGHYIEPPYFPLCSAGMHLLVGANITFGGEPKPHSVAQLDAWQQLQTFFHKQLGGKSHGVSPKI.

Residues serine 232, aspartate 324, and histidine 358 each act as charge relay system in the active site. Serine 416 is modified (phosphoserine).

The protein belongs to the C/M/P thioester hydrolase family. Monomer. As to expression, expressed in liver.

Its subcellular location is the cytoplasm. It localises to the cytosol. It catalyses the reaction hexadecanoyl-CoA + H2O = hexadecanoate + CoA + H(+). The enzyme catalyses dodecanoyl-CoA + H2O = dodecanoate + CoA + H(+). It carries out the reaction tetradecanoyl-CoA + H2O = tetradecanoate + CoA + H(+). The catalysed reaction is decanoyl-CoA + H2O = decanoate + CoA + H(+). It catalyses the reaction octadecanoyl-CoA + H2O = octadecanoate + CoA + H(+). The enzyme catalyses eicosanoyl-CoA + H2O = eicosanoate + CoA + H(+). It carries out the reaction (9Z)-octadecenoyl-CoA + H2O = (9Z)-octadecenoate + CoA + H(+). The catalysed reaction is (9Z)-hexadecenoyl-CoA + H2O = (9Z)-hexadecenoate + CoA + H(+). It catalyses the reaction (9E)-octadecenoyl-CoA + H2O = (9E)-octadecenoate + CoA + H(+). It participates in lipid metabolism; fatty acid metabolism. Functionally, catalyzes the hydrolysis of acyl-CoAs into free fatty acids and coenzyme A (CoASH), regulating their respective intracellular levels. More active towards saturated and unsaturated long chain fatty acyl-CoAs (C12-C20). The polypeptide is Acyl-coenzyme A thioesterase 1 (Acot1) (Rattus norvegicus (Rat)).